We begin with the raw amino-acid sequence, 432 residues long: Glutamate-1-semialdehyde 2,1-aminomutase (432 aa).

Lys265 bears the N6-(pyridoxal phosphate)lysine mark.

Belongs to the class-III pyridoxal-phosphate-dependent aminotransferase family. HemL subfamily. As to quaternary structure, homodimer. It depends on pyridoxal 5'-phosphate as a cofactor.

Its subcellular location is the cytoplasm. It carries out the reaction (S)-4-amino-5-oxopentanoate = 5-aminolevulinate. It functions in the pathway porphyrin-containing compound metabolism; protoporphyrin-IX biosynthesis; 5-aminolevulinate from L-glutamyl-tRNA(Glu): step 2/2. The protein is Glutamate-1-semialdehyde 2,1-aminomutase of Vibrio cholerae serotype O1 (strain ATCC 39541 / Classical Ogawa 395 / O395).